Here is a 490-residue protein sequence, read N- to C-terminus: Protein nucleotidyltransferase YdiU (490 aa).

Positions 86, 88, 89, 109, 121, 122, 172, and 179 each coordinate ATP. Catalysis depends on D248, which acts as the Proton acceptor. N249 and D258 together coordinate Mg(2+). An ATP-binding site is contributed by D258.

The protein belongs to the SELO family. Requires Mg(2+) as cofactor. Mn(2+) serves as cofactor.

It carries out the reaction L-seryl-[protein] + ATP = 3-O-(5'-adenylyl)-L-seryl-[protein] + diphosphate. It catalyses the reaction L-threonyl-[protein] + ATP = 3-O-(5'-adenylyl)-L-threonyl-[protein] + diphosphate. The catalysed reaction is L-tyrosyl-[protein] + ATP = O-(5'-adenylyl)-L-tyrosyl-[protein] + diphosphate. The enzyme catalyses L-histidyl-[protein] + UTP = N(tele)-(5'-uridylyl)-L-histidyl-[protein] + diphosphate. It carries out the reaction L-seryl-[protein] + UTP = O-(5'-uridylyl)-L-seryl-[protein] + diphosphate. It catalyses the reaction L-tyrosyl-[protein] + UTP = O-(5'-uridylyl)-L-tyrosyl-[protein] + diphosphate. Nucleotidyltransferase involved in the post-translational modification of proteins. It can catalyze the addition of adenosine monophosphate (AMP) or uridine monophosphate (UMP) to a protein, resulting in modifications known as AMPylation and UMPylation. The protein is Protein nucleotidyltransferase YdiU of Rhizobium meliloti (strain 1021) (Ensifer meliloti).